Consider the following 214-residue polypeptide: Probable nicotinate-nucleotide adenylyltransferase (214 aa).

Belongs to the NadD family.

The catalysed reaction is nicotinate beta-D-ribonucleotide + ATP + H(+) = deamido-NAD(+) + diphosphate. It participates in cofactor biosynthesis; NAD(+) biosynthesis; deamido-NAD(+) from nicotinate D-ribonucleotide: step 1/1. Functionally, catalyzes the reversible adenylation of nicotinate mononucleotide (NaMN) to nicotinic acid adenine dinucleotide (NaAD). The polypeptide is Probable nicotinate-nucleotide adenylyltransferase (Mycobacterium bovis (strain ATCC BAA-935 / AF2122/97)).